Reading from the N-terminus, the 462-residue chain is Glutamate decarboxylase alpha (462 aa).

The residue at position 273 (Lys-273) is an N6-(pyridoxal phosphate)lysine.

Belongs to the group II decarboxylase family. The cofactor is pyridoxal 5'-phosphate.

The enzyme catalyses L-glutamate + H(+) = 4-aminobutanoate + CO2. Converts internalized glutamate to GABA and increases the internal pH. Involved in glutamate-dependent acid resistance in gastric fluid. This Listeria monocytogenes serovar 1/2a (strain ATCC BAA-679 / EGD-e) protein is Glutamate decarboxylase alpha (gadA).